The primary structure comprises 230 residues: Uracil-DNA glycosylase (230 aa).

Asp-72 acts as the Proton acceptor in catalysis.

The protein belongs to the uracil-DNA glycosylase (UDG) superfamily. UNG family.

Its subcellular location is the cytoplasm. The catalysed reaction is Hydrolyzes single-stranded DNA or mismatched double-stranded DNA and polynucleotides, releasing free uracil.. In terms of biological role, excises uracil residues from the DNA which can arise as a result of misincorporation of dUMP residues by DNA polymerase or due to deamination of cytosine. The polypeptide is Uracil-DNA glycosylase (Wolinella succinogenes (strain ATCC 29543 / DSM 1740 / CCUG 13145 / JCM 31913 / LMG 7466 / NCTC 11488 / FDC 602W) (Vibrio succinogenes)).